A 208-amino-acid chain; its full sequence is Small ribosomal subunit protein uS4 (208 aa).

The region spanning R98–G168 is the S4 RNA-binding domain.

Belongs to the universal ribosomal protein uS4 family. Part of the 30S ribosomal subunit. Contacts protein S5. The interaction surface between S4 and S5 is involved in control of translational fidelity.

Its function is as follows. One of the primary rRNA binding proteins, it binds directly to 16S rRNA where it nucleates assembly of the body of the 30S subunit. Functionally, with S5 and S12 plays an important role in translational accuracy. This is Small ribosomal subunit protein uS4 from Desulforapulum autotrophicum (strain ATCC 43914 / DSM 3382 / VKM B-1955 / HRM2) (Desulfobacterium autotrophicum).